A 117-amino-acid chain; its full sequence is Large ribosomal subunit protein uL24 (117 aa).

The span at 1-12 (MSKKNSQTSPQR) shows a compositional bias: polar residues. Residues 1-20 (MSKKNSQTSPQRQKMHVKKG) are disordered.

This sequence belongs to the universal ribosomal protein uL24 family. In terms of assembly, part of the 50S ribosomal subunit.

One of two assembly initiator proteins, it binds directly to the 5'-end of the 23S rRNA, where it nucleates assembly of the 50S subunit. In terms of biological role, one of the proteins that surrounds the polypeptide exit tunnel on the outside of the subunit. The chain is Large ribosomal subunit protein uL24 from Microcystis aeruginosa (strain NIES-843 / IAM M-2473).